Here is a 621-residue protein sequence, read N- to C-terminus: Cryptochrome-1 (621 aa).

A Photolyase/cryptochrome alpha/beta domain is found at 3–132; the sequence is VNAVHWFRKG…EVIVRISHTL (130 aa). Short sequence motifs (LIR) lie at residues 50 to 54, 82 to 87, and 151 to 156; these read NRWRF, DVFPRL, and KRFQTL. Ser-252 is a binding site for FAD. 4 consecutive short sequence motifs (LIR) follow at residues 255–260, 271–276, 285–290, and 335–339; these read LRFGCL, DLYKKV, SLYGQL, and TGFPW. An FAD-binding site is contributed by Gln-289. His-355 provides a ligand contact to FAD. Positions 379-384 match the LIR 8 motif; it reads KVFEEL. 387-389 provides a ligand contact to FAD; it reads DAD. 5 short sequence motifs (LIR) span residues 395 to 400, 411 to 416, 430 to 435, 486 to 491, and 492 to 497; these read GSWMWL, HCYCPV, RRYLPV, QIYQQL, and SRYRGL. Positions 581–621 are disordered; sequence QSHLMQPGRASLGTGISAGKRPNPEEETQSVGPKVQRQSTN.

It belongs to the DNA photolyase class-1 family. As to quaternary structure, component of the circadian core oscillator, which includes the CRY proteins, CLOCK or NPAS2, BMAL1 or BMAL2, CSNK1E, and the PER proteins. It depends on FAD as a cofactor. The cofactor is (6R)-5,10-methylene-5,6,7,8-tetrahydrofolate. In terms of tissue distribution, expressed in the pineal gland.

It localises to the cytoplasm. It is found in the nucleus. Functionally, transcriptional repressor which forms a core component of the circadian clock. The circadian clock, an internal time-keeping system, regulates various physiological processes through the generation of approximately 24 hour circadian rhythms in gene expression, which are translated into rhythms in metabolism and behavior. It is derived from the Latin roots 'circa' (about) and 'diem' (day) and acts as an important regulator of a wide array of physiological functions including metabolism, sleep, body temperature, blood pressure, endocrine, immune, cardiovascular, and renal function. Consists of two major components: the central clock, residing in the suprachiasmatic nucleus (SCN) of the brain, and the peripheral clocks that are present in nearly every tissue and organ system. Both the central and peripheral clocks can be reset by environmental cues, also known as Zeitgebers (German for 'timegivers'). The predominant Zeitgeber for the central clock is light, which is sensed by retina and signals directly to the SCN. The central clock entrains the peripheral clocks through neuronal and hormonal signals, body temperature and feeding-related cues, aligning all clocks with the external light/dark cycle. Circadian rhythms allow an organism to achieve temporal homeostasis with its environment at the molecular level by regulating gene expression to create a peak of protein expression once every 24 hours to control when a particular physiological process is most active with respect to the solar day. Transcription and translation of core clock components (CLOCK, NPAS2, BMAL1, BMAL2, PER1, PER2, PER3, CRY1 and CRY2) plays a critical role in rhythm generation, whereas delays imposed by post-translational modifications (PTMs) are important for determining the period (tau) of the rhythms (tau refers to the period of a rhythm and is the length, in time, of one complete cycle). A diurnal rhythm is synchronized with the day/night cycle, while the ultradian and infradian rhythms have a period shorter and longer than 24 hours, respectively. Disruptions in the circadian rhythms contribute to the pathology of cardiovascular diseases, cancer, metabolic syndromes and aging. A transcription/translation feedback loop (TTFL) forms the core of the molecular circadian clock mechanism. Transcription factors, CLOCK or NPAS2 and BMAL1 or BMAL2, form the positive limb of the feedback loop, act in the form of a heterodimer and activate the transcription of core clock genes and clock-controlled genes (involved in key metabolic processes), harboring E-box elements (5'-CACGTG-3') within their promoters. The core clock genes: PER1/2/3 and CRY1/2 which are transcriptional repressors form the negative limb of the feedback loop and interact with the CLOCK|NPAS2-BMAL1|BMAL2 heterodimer inhibiting its activity and thereby negatively regulating their own expression. This heterodimer also activates nuclear receptors NR1D1/2 and RORA/B/G, which form a second feedback loop and which activate and repress BMAL1 transcription, respectively. CRY1 and CRY2 have redundant functions but also differential and selective contributions at least in defining the pace of the SCN circadian clock and its circadian transcriptional outputs. More potent transcriptional repressor in cerebellum and liver than CRY2, though more effective in lengthening the period of the SCN oscillator. On its side, CRY2 seems to play a critical role in tuning SCN circadian period by opposing the action of CRY1. With CRY2, is dispensable for circadian rhythm generation but necessary for the development of intercellular networks for rhythm synchrony. Capable of translocating circadian clock core proteins such as PER proteins to the nucleus. Interacts with CLOCK-BMAL1 independently of PER proteins and is found at CLOCK-BMAL1-bound sites, suggesting that CRY may act as a molecular gatekeeper to maintain CLOCK-BMAL1 in a poised and repressed state until the proper time for transcriptional activation. Represses CLOCK-BMAL1-mediated transcriptional activation. The chain is Cryptochrome-1 (CRY1) from Gallus gallus (Chicken).